A 228-amino-acid polypeptide reads, in one-letter code: Mediator of RNA polymerase II transcription subunit 7-B (228 aa).

Belongs to the Mediator complex subunit 7 family. Component of the Mediator complex.

It is found in the nucleus. Its function is as follows. Component of the Mediator complex, a coactivator involved in the regulated transcription of nearly all RNA polymerase II-dependent genes. Mediator functions as a bridge to convey information from gene-specific regulatory proteins to the basal RNA polymerase II transcription machinery. Mediator is recruited to promoters by direct interactions with regulatory proteins and serves as a scaffold for the assembly of a functional preinitiation complex with RNA polymerase II and the general transcription factors. This chain is Mediator of RNA polymerase II transcription subunit 7-B (med7-b), found in Xenopus laevis (African clawed frog).